Here is a 273-residue protein sequence, read N- to C-terminus: 3-methyl-2-oxobutanoate hydroxymethyltransferase (273 aa).

Mg(2+)-binding residues include aspartate 53 and aspartate 92. 3-methyl-2-oxobutanoate-binding positions include 53–54 (DS), aspartate 92, and lysine 122. Position 124 (glutamate 124) interacts with Mg(2+). Glutamate 191 (proton acceptor) is an active-site residue.

It belongs to the PanB family. Homodecamer; pentamer of dimers. It depends on Mg(2+) as a cofactor.

The protein localises to the cytoplasm. The catalysed reaction is 3-methyl-2-oxobutanoate + (6R)-5,10-methylene-5,6,7,8-tetrahydrofolate + H2O = 2-dehydropantoate + (6S)-5,6,7,8-tetrahydrofolate. The protein operates within cofactor biosynthesis; (R)-pantothenate biosynthesis; (R)-pantoate from 3-methyl-2-oxobutanoate: step 1/2. Catalyzes the reversible reaction in which hydroxymethyl group from 5,10-methylenetetrahydrofolate is transferred onto alpha-ketoisovalerate to form ketopantoate. In Porphyromonas gingivalis (strain ATCC 33277 / DSM 20709 / CIP 103683 / JCM 12257 / NCTC 11834 / 2561), this protein is 3-methyl-2-oxobutanoate hydroxymethyltransferase.